Reading from the N-terminus, the 275-residue chain is Rhamnulose-1-phosphate aldolase (275 aa).

Glu-117 is an active-site residue. The Zn(2+) site is built by His-141, His-143, and His-212.

The protein belongs to the aldolase class II family. RhaD subfamily. In terms of assembly, homotetramer. The cofactor is Zn(2+).

Its subcellular location is the cytoplasm. It catalyses the reaction L-rhamnulose 1-phosphate = (S)-lactaldehyde + dihydroxyacetone phosphate. The protein operates within carbohydrate degradation; L-rhamnose degradation; glycerone phosphate from L-rhamnose: step 3/3. Its function is as follows. Catalyzes the reversible cleavage of L-rhamnulose-1-phosphate to dihydroxyacetone phosphate (DHAP) and L-lactaldehyde. The polypeptide is Rhamnulose-1-phosphate aldolase (Salmonella paratyphi B (strain ATCC BAA-1250 / SPB7)).